The sequence spans 423 residues: UDP-N-acetylglucosamine 1-carboxyvinyltransferase 1 (423 aa).

Residue 23–24 coordinates phosphoenolpyruvate; it reads KN. Arg96 lines the UDP-N-acetyl-alpha-D-glucosamine pocket. Cys120 acts as the Proton donor in catalysis. 2-(S-cysteinyl)pyruvic acid O-phosphothioketal is present on Cys120. UDP-N-acetyl-alpha-D-glucosamine contacts are provided by residues 125–129, Asp309, and Val331; that span reads RPIDL.

This sequence belongs to the EPSP synthase family. MurA subfamily.

The protein localises to the cytoplasm. It carries out the reaction phosphoenolpyruvate + UDP-N-acetyl-alpha-D-glucosamine = UDP-N-acetyl-3-O-(1-carboxyvinyl)-alpha-D-glucosamine + phosphate. The protein operates within cell wall biogenesis; peptidoglycan biosynthesis. Functionally, cell wall formation. Adds enolpyruvyl to UDP-N-acetylglucosamine. In Streptococcus thermophilus (strain ATCC BAA-250 / LMG 18311), this protein is UDP-N-acetylglucosamine 1-carboxyvinyltransferase 1.